Reading from the N-terminus, the 2298-residue chain is Protein Ycf2 (2298 aa).

1652-1659 (GSIGTGRS) contributes to the ATP binding site.

Belongs to the Ycf2 family.

It is found in the plastid. Its subcellular location is the chloroplast stroma. Probable ATPase of unknown function. Its presence in a non-photosynthetic plant (Epifagus virginiana) and experiments in tobacco indicate that it has an essential function which is probably not related to photosynthesis. This is Protein Ycf2 from Aethionema cordifolium (Lebanon stonecress).